A 285-amino-acid polypeptide reads, in one-letter code: 1,4-dihydroxy-2-naphthoyl-CoA synthase (285 aa).

Substrate contacts are provided by residues R45, 84–88 (SGGDQ), Y97, 129–133 (YAIGG), T155, S161, Y258, and K273. A hydrogencarbonate-binding site is contributed by 154–156 (QTG).

The protein belongs to the enoyl-CoA hydratase/isomerase family. MenB subfamily. Requires hydrogencarbonate as cofactor.

The catalysed reaction is 2-succinylbenzoyl-CoA + H(+) = 1,4-dihydroxy-2-naphthoyl-CoA + H2O. It functions in the pathway quinol/quinone metabolism; 1,4-dihydroxy-2-naphthoate biosynthesis; 1,4-dihydroxy-2-naphthoate from chorismate: step 6/7. The protein operates within quinol/quinone metabolism; menaquinone biosynthesis. Functionally, converts o-succinylbenzoyl-CoA (OSB-CoA) to 1,4-dihydroxy-2-naphthoyl-CoA (DHNA-CoA). The protein is 1,4-dihydroxy-2-naphthoyl-CoA synthase of Haemophilus influenzae (strain ATCC 51907 / DSM 11121 / KW20 / Rd).